Here is a 348-residue protein sequence, read N- to C-terminus: Hereditary hemochromatosis protein homolog (348 aa).

An N-terminal signal peptide occupies residues Met1 to Gly22. Residues Arg23–Glu114 are alpha-1. At Arg23–Val306 the chain is on the extracellular side. 3 N-linked (GlcNAc...) asparagine glycosylation sites follow: Asn110, Asn130, and Asn234. The alpha-2 stretch occupies residues Ser115–Gln205. Cystine bridges form between Cys124-Cys187 and Cys225-Cys282. The segment at Val206–Trp297 is alpha-3. The region spanning Pro207–Thr296 is the Ig-like C1-type domain. Residues Glu298 to Val306 are connecting peptide. The chain crosses the membrane as a helical span at residues Thr307–Arg330. The Cytoplasmic portion of the chain corresponds to Lys331 to Glu348.

This sequence belongs to the MHC class I family. As to quaternary structure, binds TFR through the extracellular domain in a pH-dependent manner.

The protein localises to the cell membrane. Binds to transferrin receptor (TFR) and reduces its affinity for iron-loaded transferrin. The sequence is that of Hereditary hemochromatosis protein homolog (HFE) from Ceratotherium simum (White rhinoceros).